We begin with the raw amino-acid sequence, 213 residues long: MNIFRITADLAHAVAIVILLLKIWKSRSCEGISGRSQILFAVTFFTRYLDLFTSFYSLYNTVMKVLFLAGSIGTVYLMWVKFKATYDRNNDTFRIEFLVIPSIILALIINHEFMFMEVMWTFSIYLEAVAIMPQLFMLSRTGNAETITAHYLFALGSYRFLYIFNWVYRYYTESFFDPIAVVAGIVQTVLYADFFYLYITRVIQSNRQFEMSA.

Residues 1–2 lie on the Lumenal side of the membrane; it reads MN. Residues 3 to 21 traverse the membrane as a helical segment; that stretch reads IFRITADLAHAVAIVILLL. The Cytoplasmic portion of the chain corresponds to 22 to 35; it reads KIWKSRSCEGISGR. A helical membrane pass occupies residues 36 to 53; it reads SQILFAVTFFTRYLDLFT. Over 54–61 the chain is Lumenal; that stretch reads SFYSLYNT. A helical membrane pass occupies residues 62–80; it reads VMKVLFLAGSIGTVYLMWV. Topologically, residues 81 to 96 are cytoplasmic; the sequence is KFKATYDRNNDTFRIE. A helical membrane pass occupies residues 97-110; the sequence is FLVIPSIILALIIN. The Lumenal segment spans residues 111–117; sequence HEFMFME. The chain crosses the membrane as a helical span at residues 118–137; that stretch reads VMWTFSIYLEAVAIMPQLFM. Residues 138 to 149 lie on the Cytoplasmic side of the membrane; that stretch reads LSRTGNAETITA. Residues 150–168 traverse the membrane as a helical segment; that stretch reads HYLFALGSYRFLYIFNWVY. Over 169–178 the chain is Lumenal; the sequence is RYYTESFFDP. The helical transmembrane segment at 179-199 threads the bilayer; sequence IAVVAGIVQTVLYADFFYLYI. The Cytoplasmic portion of the chain corresponds to 200-213; that stretch reads TRVIQSNRQFEMSA.

The protein belongs to the ERD2 family.

The protein resides in the endoplasmic reticulum membrane. In terms of biological role, required for the retention of luminal endoplasmic reticulum proteins. Determines the specificity of the luminal ER protein retention system. Also required for normal vesicular traffic through the Golgi. In Caenorhabditis briggsae, this protein is ER lumen protein-retaining receptor (erd-2.1).